Consider the following 516-residue polypeptide: Nondiscriminating glutamyl-tRNA synthetase EARS2, mitochondrial (516 aa).

Residues M1–F39 constitute a mitochondrion transit peptide. Position 38 to 40 (R38 to A40) interacts with L-glutamate. The 'HIGH' region motif lies at P43 to G51. H48 is a binding site for ATP. L-glutamate-binding positions include E74, Y226–N230, and R244. ATP is bound by residues E247 and K282–R286. A 'KMSKS' region motif is present at residues K282–R286.

Belongs to the class-I aminoacyl-tRNA synthetase family. Glutamate--tRNA ligase type 1 subfamily.

It localises to the mitochondrion matrix. The enzyme catalyses tRNA(Glx) + L-glutamate + ATP = L-glutamyl-tRNA(Glx) + AMP + diphosphate. It catalyses the reaction tRNA(Glu) + L-glutamate + ATP = L-glutamyl-tRNA(Glu) + AMP + diphosphate. The catalysed reaction is tRNA(Gln) + L-glutamate + ATP = L-glutamyl-tRNA(Gln) + AMP + diphosphate. Non-discriminating glutamyl-tRNA synthetase that catalyzes aminoacylation of both mitochondrial tRNA(Glu) and tRNA(Gln) and participates in RNA aminoacylation for mitochondrial protein translation. Attachs glutamate to tRNA(Glu) or tRNA(Gln) in a two-step reaction: glutamate is first activated by ATP to form Glu-AMP and then transferred to the acceptor end of tRNA(Glu) or tRNA(Gln). This chain is Nondiscriminating glutamyl-tRNA synthetase EARS2, mitochondrial, found in Xenopus tropicalis (Western clawed frog).